Reading from the N-terminus, the 266-residue chain is MNDLYPALLLTLLAGLSTGIGSAMALVVKHTNTRFLTLALGFSAGVMLYVSFVELLPQSEETLLAGMPSQAAAWVATLAFFGGIFFIWAIDQLVPDVENPHEMSYIGRMEERVPDSMRLNRMGLFTAAAIAIHNFPEGMAVFFSALSNQNLGIVIATTIALHNIPEGMAIAVPIYFATKSRKKAFTYSFLSGLAEPLGAIVGFAILKPWLSPPVFGSVLAAVAGIMVYISLDELLPTAEEYGEHHLAISGLIAGMAVMALSLLLLA.

8 helical membrane-spanning segments follow: residues 8–28, 35–55, 70–90, 123–143, 152–172, 185–205, 209–229, and 246–266; these read LLLTLLAGLSTGIGSAMALVV, FLTLALGFSAGVMLYVSFVEL, QAAAWVATLAFFGGIFFIWAI, GLFTAAAIAIHNFPEGMAVFF, GIVIATTIALHNIPEGMAIAV, FTYSFLSGLAEPLGAIVGFAI, WLSPPVFGSVLAAVAGIMVYI, and LAISGLIAGMAVMALSLLLLA. Asparagine 134 and glutamate 137 together coordinate Fe(2+). Glutamate 137 and histidine 162 together coordinate Zn(2+). Asparagine 163, glutamate 166, and glutamate 195 together coordinate Fe(2+). Glutamate 166 contributes to the Zn(2+) binding site.

This sequence belongs to the ZIP transporter (TC 2.A.5) family. ZupT subfamily.

The protein localises to the cell membrane. It carries out the reaction Zn(2+)(in) = Zn(2+)(out). In terms of biological role, mediates zinc uptake. May also transport other divalent cations. The protein is Zinc transporter ZupT of Chlorobium phaeovibrioides (strain DSM 265 / 1930) (Prosthecochloris vibrioformis (strain DSM 265)).